The primary structure comprises 286 residues: MRYIRLCIISLLATLPLAVHASPQPLEQIKLSESQLSGRVGMIEMDLASGRTLTAWRADERFPMMSTFKVVLCGAVLARVDAGDEQLERKIHYRQQDLVDYSPVSEKHLADGMTVGELCAAAITMSDNSAANLLLATVGGPAGLTAFLRQIGDNVTRLDRWETELNEALPGDARDTTTPASMAATLRKLLTSQRLSARSQRQLLQWMVDDRVAGPLIRSVLPAGWFIADKTGASERGARGIVALLGPNNKAERIVVIYLRDTPASMAERNQQIAGIGAALIEHWQR.

The first 21 residues, 1 to 21, serve as a signal peptide directing secretion; sequence MRYIRLCIISLLATLPLAVHA. The active-site Acyl-ester intermediate is S66. C73 and C119 are oxidised to a cystine. E164 functions as the Proton acceptor in the catalytic mechanism. Position 230–232 (230–232) interacts with substrate; that stretch reads KTG.

It belongs to the class-A beta-lactamase family.

The enzyme catalyses a beta-lactam + H2O = a substituted beta-amino acid. In terms of biological role, this enzyme hydrolyzes cefotaxime, ceftazidime and other broad spectrum cephalosporins. This chain is Beta-lactamase SHV-2 (bla), found in Escherichia coli.